A 212-amino-acid polypeptide reads, in one-letter code: Interleukin-6 (212 aa).

Residues 1 to 29 (MNSLSTSAFSPVAFSLGLLLVMATAFPTP) form the signal peptide. A disulfide bridge connects residues cysteine 72 and cysteine 78. Phosphoserine is present on serine 81. Cysteines 101 and 111 form a disulfide. Residues 156–175 (QKGKNPDKATTPNPTTNAGL) are disordered. Polar residues predominate over residues 163 to 175 (KATTPNPTTNAGL).

This sequence belongs to the IL-6 superfamily. In terms of assembly, component of a hexamer of two molecules each of IL6, IL6R and IL6ST; first binds to IL6R to associate with the signaling subunit IL6ST. Interacts with IL6R (via the N-terminal ectodomain); this interaction may be affected by IL6R-binding with SORL1, hence decreasing IL6 cis signaling. Interacts with SORL1 (via the N-terminal ectodomain); this interaction leads to IL6 internalization and lysosomal degradation. May form a trimeric complex with the soluble SORL1 ectodomain and soluble IL6R receptor; this interaction might stabilize circulating IL6, hence promoting IL6 trans signaling.

It is found in the secreted. In terms of biological role, cytokine with a wide variety of biological functions in immunity, tissue regeneration, and metabolism. Binds to IL6R, then the complex associates to the signaling subunit IL6ST/gp130 to trigger the intracellular IL6-signaling pathway. The interaction with the membrane-bound IL6R and IL6ST stimulates 'classic signaling', whereas the binding of IL6 and soluble IL6R to IL6ST stimulates 'trans-signaling'. Alternatively, 'cluster signaling' occurs when membrane-bound IL6:IL6R complexes on transmitter cells activate IL6ST receptors on neighboring receiver cells. Its function is as follows. IL6 is a potent inducer of the acute phase response. Rapid production of IL6 contributes to host defense during infection and tissue injury, but excessive IL6 synthesis is involved in disease pathology. In the innate immune response, is synthesized by myeloid cells, such as macrophages and dendritic cells, upon recognition of pathogens through toll-like receptors (TLRs) at the site of infection or tissue injury. In the adaptive immune response, is required for the differentiation of B cells into immunoglobulin-secreting cells. Plays a major role in the differentiation of CD4(+) T cell subsets. Essential factor for the development of T follicular helper (Tfh) cells that are required for the induction of germinal-center formation. Required to drive naive CD4(+) T cells to the Th17 lineage. Also required for proliferation of myeloma cells and the survival of plasmablast cells. Acts as an essential factor in bone homeostasis and on vessels directly or indirectly by induction of VEGF, resulting in increased angiogenesis activity and vascular permeability. Induces, through 'trans-signaling' and synergistically with IL1B and TNF, the production of VEGF. Involved in metabolic controls, is discharged into the bloodstream after muscle contraction increasing lipolysis and improving insulin resistance. 'Trans-signaling' in central nervous system also regulates energy and glucose homeostasis. Mediates, through GLP-1, crosstalk between insulin-sensitive tissues, intestinal L cells and pancreatic islets to adapt to changes in insulin demand. Also acts as a myokine. Plays a protective role during liver injury, being required for maintenance of tissue regeneration. Also has a pivotal role in iron metabolism by regulating HAMP/hepcidin expression upon inflammation or bacterial infection. Through activation of IL6ST-YAP-NOTCH pathway, induces inflammation-induced epithelial regeneration. The polypeptide is Interleukin-6 (IL6) (Sus scrofa (Pig)).